The following is a 144-amino-acid chain: Large ribosomal subunit protein uL14 (144 aa).

It belongs to the universal ribosomal protein uL14 family. As to quaternary structure, part of the 50S ribosomal subunit. Forms a cluster with proteins L3 and L24e, part of which may contact the 16S rRNA in 2 intersubunit bridges.

In terms of biological role, binds to 23S rRNA. Forms part of two intersubunit bridges in the 70S ribosome. This chain is Large ribosomal subunit protein uL14, found in Cenarchaeum symbiosum (strain A).